A 61-amino-acid chain; its full sequence is Metallothionein-2B (61 aa).

At M1 the chain carries N-acetylmethionine. The tract at residues 1 to 29 is beta; it reads MDPNCSCAAGGSCTCAGSCKCKDCRCTSC. The a divalent metal cation site is built by C5, C7, C13, C15, C19, C21, C24, C26, C29, C33, C34, C36, C37, C41, C44, C48, C50, C57, C59, and C60. The alpha stretch occupies residues 30–61; the sequence is KKSCCSCCPAGCARCAQGCICKGASDKCSCCA.

The protein belongs to the metallothionein superfamily. Type 1 family. As to quaternary structure, monomer.

In terms of biological role, metallothioneins have a high content of cysteine residues that bind various heavy metals; these proteins are transcriptionally regulated by both heavy metals and glucocorticoids. The sequence is that of Metallothionein-2B (MT2B) from Sus scrofa (Pig).